The chain runs to 157 residues: MQTTISLQVNGQPVEVSAMPDTPLLLILRNDLCLNGPKYGCGLGECGACTVIIDGVAARSCVIPLAGAAGRNITTLEGLGSKAAPHPVQQAFIDEQAAQCGYCMNGMIMTAKALLDRIPEPSDEQIRNELSANLCRCGTHVEILRAVRRAAETRRKP.

In terms of domain architecture, 2Fe-2S ferredoxin-type spans 3 to 79 (TTISLQVNGQ…GRNITTLEGL (77 aa)). Cys41, Cys46, Cys49, and Cys61 together coordinate [2Fe-2S] cluster.

[2Fe-2S] cluster is required as a cofactor.

It carries out the reaction 2 Fe(III)-[cytochrome] + nicotinate + H2O = 2 Fe(II)-[cytochrome] + 6-hydroxynicotinate + 2 H(+). It participates in cofactor degradation; nicotinate degradation. In terms of biological role, subunit of the two-component enzyme NicAB that mediates nicotinate hydroxylation, the first step in the aerobic nicotinate degradation pathway. Mediates conversion of nicotinate into 6-hydroxynicotinate (6HNA). This chain is Nicotinate dehydrogenase subunit A (nicA), found in Pseudomonas putida (strain ATCC 47054 / DSM 6125 / CFBP 8728 / NCIMB 11950 / KT2440).